Consider the following 332-residue polypeptide: Isopentenyl-diphosphate delta-isomerase (332 aa).

Residue 6-7 (RK) coordinates substrate. Residues 65–67 (AMT), serine 95, and asparagine 123 contribute to the FMN site. 95–97 (SGR) lines the substrate pocket. Glutamine 157 serves as a coordination point for substrate. Mg(2+) is bound at residue glutamate 158. FMN is bound by residues lysine 187, threonine 217, 264–266 (GVY), alanine 285, and 285–286 (AR).

Belongs to the IPP isomerase type 2 family. In terms of assembly, homooctamer. Dimer of tetramers. FMN serves as cofactor. NADPH is required as a cofactor. Requires Mg(2+) as cofactor.

It localises to the cytoplasm. It catalyses the reaction isopentenyl diphosphate = dimethylallyl diphosphate. Its activity is regulated as follows. Competitively inhibited by N,N-dimethyl-2-amino-1-ethyl diphosphate (NIPP) and isopentyl diphosphate. Involved in the biosynthesis of isoprenoids. Catalyzes the 1,3-allylic rearrangement of the homoallylic substrate isopentenyl (IPP) to its allylic isomer, dimethylallyl diphosphate (DMAPP). This chain is Isopentenyl-diphosphate delta-isomerase, found in Thermus thermophilus (strain ATCC BAA-163 / DSM 7039 / HB27).